A 137-amino-acid polypeptide reads, in one-letter code: Large ribosomal subunit protein uL16 (137 aa).

It belongs to the universal ribosomal protein uL16 family. As to quaternary structure, part of the 50S ribosomal subunit.

In terms of biological role, binds 23S rRNA and is also seen to make contacts with the A and possibly P site tRNAs. The chain is Large ribosomal subunit protein uL16 from Coxiella burnetii (strain RSA 331 / Henzerling II).